A 369-amino-acid chain; its full sequence is 3 beta-hydroxysteroid dehydrogenase type 7 (369 aa).

Tyrosine 159 serves as the catalytic Proton acceptor. Lysine 163 provides a ligand contact to NAD(+). Helical transmembrane passes span leucine 289 to leucine 309 and proline 311 to phenylalanine 331.

It belongs to the 3-beta-HSD family.

The protein resides in the endoplasmic reticulum membrane. The enzyme catalyses 7alpha-hydroxycholesterol + NAD(+) = 7alpha-hydroxycholest-4-en-3-one + NADH + H(+). It catalyses the reaction 7alpha,25-dihydroxycholesterol + NAD(+) = 7alpha,25-dihydroxy-4-cholesten-3-one + NADH + H(+). It carries out the reaction (25R)-cholest-5-en-3beta,7alpha,26-triol + NAD(+) = (25R)-7alpha,26-dihydroxycholest-4-en-3-one + NADH + H(+). The catalysed reaction is (24S)-7alpha-dihydroxycholesterol + NAD(+) = (24S)-7alpha,24-dihydroxycholest-4-en-3-one + NADH + H(+). The protein operates within lipid metabolism; steroid biosynthesis. Functionally, the 3-beta-HSD enzymatic system plays a crucial role in the biosynthesis of all classes of hormonal steroids. HSD VII is active against four 7-alpha-hydroxylated sterols. Does not metabolize several different C(19/21) steroids as substrates. Involved in bile acid synthesis. Plays a key role in cell positioning and movement in lymphoid tissues by mediating degradation of 7-alpha,25-dihydroxycholesterol (7-alpha,25-OHC): 7-alpha,25-OHC acts as a ligand for the G protein-coupled receptor GPR183/EBI2, a chemotactic receptor for a number of lymphoid cells. This is 3 beta-hydroxysteroid dehydrogenase type 7 from Homo sapiens (Human).